Reading from the N-terminus, the 281-residue chain is Pantothenate synthetase (281 aa).

30-37 is a binding site for ATP; it reads MGYLHEGH. H37 functions as the Proton donor in the catalytic mechanism. Residue Q61 participates in (R)-pantoate binding. Residue Q61 participates in beta-alanine binding. 147–150 is a binding site for ATP; sequence GQKD. Q153 is a binding site for (R)-pantoate. ATP-binding positions include V176 and 184–187; that span reads MSSR.

It belongs to the pantothenate synthetase family. As to quaternary structure, homodimer.

It is found in the cytoplasm. It carries out the reaction (R)-pantoate + beta-alanine + ATP = (R)-pantothenate + AMP + diphosphate + H(+). Its pathway is cofactor biosynthesis; (R)-pantothenate biosynthesis; (R)-pantothenate from (R)-pantoate and beta-alanine: step 1/1. Functionally, catalyzes the condensation of pantoate with beta-alanine in an ATP-dependent reaction via a pantoyl-adenylate intermediate. This chain is Pantothenate synthetase, found in Acetivibrio thermocellus (strain ATCC 27405 / DSM 1237 / JCM 9322 / NBRC 103400 / NCIMB 10682 / NRRL B-4536 / VPI 7372) (Clostridium thermocellum).